Consider the following 2104-residue polypeptide: Transmembrane matrix receptor MUP-4 (2104 aa).

A signal peptide spans 1-15 (MRWVPLVLLPLIASA). The Extracellular segment spans residues 16–1860 (ATTYQHRQTY…FCETAPSNLP (1845 aa)). EGF-like domains lie at 71–110 (VVNE…TSPD), 122–163 (TTNE…VSTS), and 175–213 (SVNE…ASPN). Disulfide bonds link Cys-75–Cys-89, Cys-83–Cys-98, Cys-126–Cys-142, Cys-136–Cys-151, Cys-179–Cys-192, and Cys-186–Cys-201. The WR1 domain maps to 220–265 (RVCNKPKAPEYYGQQSRQPQCSEGSGCGPNEECRFNTAGEKVCQCR). 3 EGF-like domains span residues 278–315 (VFSQ…VSPD), 327–360 (VRNE…SNCI), and 377–416 (AANQ…VSSN). 7 cysteine pairs are disulfide-bonded: Cys-282–Cys-294, Cys-288–Cys-303, Cys-331–Cys-344, Cys-338–Cys-353, Cys-355–Cys-359, Cys-381–Cys-395, and Cys-389–Cys-404. The 176-residue stretch at 437–612 (DLVFLIDGSG…DLNTRLRSAI (176 aa)) folds into the VWFA domain. Asn-494 and Asn-556 each carry an N-linked (GlcNAc...) asparagine glycan. 2 consecutive EGF-like domains span residues 728 to 772 (SNDE…NKCE) and 819 to 857 (LIDE…KSPE). Disulfide bonds link Cys-732–Cys-746, Cys-740–Cys-756, Cys-758–Cys-771, Cys-823–Cys-836, Cys-830–Cys-845, Cys-873–Cys-886, Cys-880–Cys-895, Cys-923–Cys-937, Cys-931–Cys-946, Cys-972–Cys-985, Cys-979–Cys-995, Cys-1020–Cys-1034, Cys-1028–Cys-1046, Cys-1075–Cys-1089, Cys-1083–Cys-1098, Cys-1125–Cys-1139, Cys-1133–Cys-1148, Cys-1173–Cys-1187, Cys-1181–Cys-1196, Cys-1219–Cys-1233, and Cys-1227–Cys-1242. The EGF-like 9; calcium-binding domain maps to 869–907 (QRNECLDGTHNCSMNADCIDLPDGFLCRCKEDFVDISPN). An N-linked (GlcNAc...) asparagine glycan is attached at Asn-879. 7 EGF-like domains span residues 919–958 (LVNE…HDEL), 968–1007 (LNQI…KSPL), 1016–1058 (VEPI…VGAV), 1071–1110 (LVNE…ESPV), 1121–1160 (LVNE…QKPE), 1169–1208 (IINE…EMPS), and 1215–1254 (RFDE…EISD). A glycan (N-linked (GlcNAc...) asparagine) is linked at Asn-1037. N-linked (GlcNAc...) asparagine glycosylation occurs at Asn-1132. Asn-1271, Asn-1403, and Asn-1576 each carry an N-linked (GlcNAc...) asparagine glycan. 2 SEA domains span residues 1322 to 1444 (PTTS…DDAD) and 1495 to 1620 (AVES…PEQL). EGF-like domains follow at residues 1622-1658 (PFSN…LNPS), 1669-1705 (GVNE…YVNS), and 1717-1754 (SIDY…LRKS). 11 disulfides stabilise this stretch: Cys-1626–Cys-1637, Cys-1631–Cys-1646, Cys-1673–Cys-1687, Cys-1681–Cys-1696, Cys-1721–Cys-1733, Cys-1727–Cys-1742, Cys-1776–Cys-1789, Cys-1783–Cys-1798, Cys-1821–Cys-1830, Cys-1824–Cys-1841, and Cys-1843–Cys-1852. Asn-1730 and Asn-1782 each carry an N-linked (GlcNAc...) asparagine glycan. The region spanning 1772 to 1810 (DIDECALGLHNCSAAAICIDKKIGYECQCQEGYEDGNPS) is the EGF-like 20; calcium-binding domain. The region spanning 1817–1853 (AASLCGLCNGHGDCIHDALSSNVTCACLDGYTGQFCE) is the EGF-like 21 domain. The N-linked (GlcNAc...) asparagine glycan is linked to Asn-1838. The chain crosses the membrane as a helical span at residues 1861-1881 (LILMTLLALLFLLLTLLCCLY). Residues 1882–2104 (MCARCRCFGA…TTKAEEVNYF (223 aa)) lie on the Cytoplasmic side of the membrane. Residues 2031–2040 (SGAMMSSASG) are compositionally biased toward low complexity. The tract at residues 2031–2104 (SGAMMSSASG…TTKAEEVNYF (74 aa)) is disordered. Basic and acidic residues-rich tracts occupy residues 2062-2076 (VYDR…HDFE) and 2083-2104 (TGTE…VNYF).

Abundant at hypodermal cell-matrix junctions overlying muscle of threefold embryos. Expression continues in body wall muscle in larvae and adults and is also detected in other regions where cells show mechanical attachment to the hypodermis including the inner surface of the pharynx, overlying anal and intestinal muscles, overlying vulval and uterine sex muscles, male tail muscle attachment zones and the six mechanosensory neurons (at protein level).

The protein resides in the cell junction. It localises to the hemidesmosome. Its subcellular location is the cytoplasm. The protein localises to the cytoskeleton. It is found in the cell membrane. In terms of biological role, required for junctional attachments between hypodermis and muscle, and between the apical epithelial surface and the cuticular matrix. Essential for enclosure of the embryo by the hypodermis, hypodermal integrity, embryo elongation, and maintenance of hypodermal morphology in fully elongated embryos. The sequence is that of Transmembrane matrix receptor MUP-4 from Caenorhabditis elegans.